Reading from the N-terminus, the 72-residue chain is Translation initiation factor IF-1 (72 aa).

One can recognise an S1-like domain in the interval M1–R72.

The protein belongs to the IF-1 family. Component of the 30S ribosomal translation pre-initiation complex which assembles on the 30S ribosome in the order IF-2 and IF-3, IF-1 and N-formylmethionyl-tRNA(fMet); mRNA recruitment can occur at any time during PIC assembly.

The protein resides in the cytoplasm. One of the essential components for the initiation of protein synthesis. Stabilizes the binding of IF-2 and IF-3 on the 30S subunit to which N-formylmethionyl-tRNA(fMet) subsequently binds. Helps modulate mRNA selection, yielding the 30S pre-initiation complex (PIC). Upon addition of the 50S ribosomal subunit IF-1, IF-2 and IF-3 are released leaving the mature 70S translation initiation complex. This is Translation initiation factor IF-1 from Actinobacillus succinogenes (strain ATCC 55618 / DSM 22257 / CCUG 43843 / 130Z).